A 223-amino-acid polypeptide reads, in one-letter code: Phosphoribosylformylglycinamidine synthase subunit PurQ (223 aa).

One can recognise a Glutamine amidotransferase type-1 domain in the interval 3-223 (FAVLVFPGSN…MVKSWREQHV (221 aa)). Cys-85 (nucleophile) is an active-site residue. Catalysis depends on residues His-193 and Glu-195.

In terms of assembly, part of the FGAM synthase complex composed of 1 PurL, 1 PurQ and 2 PurS subunits.

The protein resides in the cytoplasm. The enzyme catalyses N(2)-formyl-N(1)-(5-phospho-beta-D-ribosyl)glycinamide + L-glutamine + ATP + H2O = 2-formamido-N(1)-(5-O-phospho-beta-D-ribosyl)acetamidine + L-glutamate + ADP + phosphate + H(+). The catalysed reaction is L-glutamine + H2O = L-glutamate + NH4(+). It participates in purine metabolism; IMP biosynthesis via de novo pathway; 5-amino-1-(5-phospho-D-ribosyl)imidazole from N(2)-formyl-N(1)-(5-phospho-D-ribosyl)glycinamide: step 1/2. Functionally, part of the phosphoribosylformylglycinamidine synthase complex involved in the purines biosynthetic pathway. Catalyzes the ATP-dependent conversion of formylglycinamide ribonucleotide (FGAR) and glutamine to yield formylglycinamidine ribonucleotide (FGAM) and glutamate. The FGAM synthase complex is composed of three subunits. PurQ produces an ammonia molecule by converting glutamine to glutamate. PurL transfers the ammonia molecule to FGAR to form FGAM in an ATP-dependent manner. PurS interacts with PurQ and PurL and is thought to assist in the transfer of the ammonia molecule from PurQ to PurL. This is Phosphoribosylformylglycinamidine synthase subunit PurQ from Staphylococcus aureus (strain bovine RF122 / ET3-1).